The sequence spans 208 residues: Ras-related protein RABH1b (208 aa).

Gly16 to Thr23 contacts GTP. The Effector region signature appears at Tyr38–Phe46. Residues Asp64–Gln68, Asn122–Asp125, and Ser152–Ala153 contribute to the GTP site. S-geranylgeranyl cysteine attachment occurs at residues Cys206 and Cys208. Position 208 is a cysteine methyl ester (Cys208).

This sequence belongs to the small GTPase superfamily. Rab family. In terms of assembly, interacts with the C-terminus of GC5, but not with GC3. As to expression, expressed in roots, stems, leaves and flowers.

It is found in the golgi apparatus membrane. Its subcellular location is the cytoplasm. The protein resides in the cytosol. Its function is as follows. Protein transport. Regulator of membrane traffic from the Golgi apparatus towards the endoplasmic reticulum (ER). Binds GTP and GDP and possesses intrinsic GTPase activity. The chain is Ras-related protein RABH1b (RABH1B) from Arabidopsis thaliana (Mouse-ear cress).